The primary structure comprises 112 residues: MANIHQENEEMEQPVQNGEEDRPLGGGEGHQPERNHRRGQARRLAPNFRWVIPNRQVNDGMGGEGDDMEIFMEEMREIRRKLRELQLRNCLRILMGELSNHHDHHDEFCLMP.

The interval 1-45 (MANIHQENEEMEQPVQNGEEDRPLGGGEGHQPERNHRRGQARRLA) is disordered. Residues 69 to 94 (EIFMEEMREIRRKLRELQLRNCLRIL) form an interaction with p75NTR/NGFR region. The tract at residues 69–112 (EIFMEEMREIRRKLRELQLRNCLRILMGELSNHHDHHDEFCLMP) is interaction with 14-3-3 epsilon. Residues 78 to 88 (IRRKLRELQLR) carry the Nuclear export signal motif. Positions 101 to 105 (HHDHH) are his cluster. C109 serves as a coordination point for Zn(2+).

It belongs to the BEX family. In terms of assembly, self-associates. Binds to the DEATH domain of p75NTR/NGFR. Interacts with 14-3-3 epsilon (YWHAE). Interacts with DIABLO/SMAC. In terms of processing, ubiquitinated. Degraded by the proteasome.

Its subcellular location is the nucleus. It localises to the cytoplasm. The protein localises to the cytosol. In terms of biological role, may be a signaling adapter molecule involved in NGFR/p75NTR-mediated apoptosis induced by NGF. Plays a role in zinc-triggered neuronal death. In absence of reductive stress, acts as a pseudosubstrate for the CRL2(FEM1B) complex: associates with FEM1B via zinc, thereby preventing association between FEM1B and its substrates. This is Protein BEX3 from Bos taurus (Bovine).